A 342-amino-acid chain; its full sequence is tRNA N6-adenosine threonylcarbamoyltransferase (342 aa).

2 residues coordinate Fe cation: histidine 111 and histidine 115. Substrate contacts are provided by residues 134 to 138 (LVSGG), aspartate 167, glycine 180, and asparagine 274. Aspartate 302 serves as a coordination point for Fe cation.

It belongs to the KAE1 / TsaD family. The cofactor is Fe(2+).

It is found in the cytoplasm. It catalyses the reaction L-threonylcarbamoyladenylate + adenosine(37) in tRNA = N(6)-L-threonylcarbamoyladenosine(37) in tRNA + AMP + H(+). In terms of biological role, required for the formation of a threonylcarbamoyl group on adenosine at position 37 (t(6)A37) in tRNAs that read codons beginning with adenine. Is involved in the transfer of the threonylcarbamoyl moiety of threonylcarbamoyl-AMP (TC-AMP) to the N6 group of A37, together with TsaE and TsaB. TsaD likely plays a direct catalytic role in this reaction. The sequence is that of tRNA N6-adenosine threonylcarbamoyltransferase from Herminiimonas arsenicoxydans.